We begin with the raw amino-acid sequence, 175 residues long: Transcription factor HES-3 (175 aa).

A bHLH domain is found at 1–49; it reads MEKKRRARINVSLEQLRSLLERHYSHQIRKRKLEKADILELSVKYMRSL. The region spanning 65–98 is the Orange domain; the sequence is YPSGFQGGLRGVSQRLRPGEGDSGLRCPLLLQRR. Residues 126–166 form a disordered region; the sequence is RAAGGSHSPQSPLPLPGGLLESSTDVVAPHPASNCQAESTR. A compositionally biased stretch (low complexity) spans 129–148; that stretch reads GGSHSPQSPLPLPGGLLESS. A WRPW motif motif is present at residues 172-175; the sequence is WRPW.

In terms of assembly, transcription repression requires formation of a complex with a corepressor protein of the Groucho/TLE family.

It localises to the nucleus. Functionally, transcriptional repressor of genes that require a bHLH protein for their transcription. The polypeptide is Transcription factor HES-3 (Hes3) (Mus musculus (Mouse)).